The sequence spans 1093 residues: Leukemia inhibitory factor receptor (1093 aa).

A signal peptide spans 1-43 (MGAFSWWRQPSWMADNKRGRMTPSLPWLLSALTLLHLMMHVNG). At 44–829 (LKRGVQQDLK…SMFVVTKENS (786 aa)) the chain is on the extracellular side. Positions 45–127 (KRGVQQDLKC…QSKFTLNEKD (83 aa)) constitute a Fibronectin type-III 1 domain. 2 disulfides stabilise this stretch: Cys-54–Cys-64 and Cys-81–Cys-89. Residues Asn-165, Asn-200, Asn-239, and Asn-262 are each glycosylated (N-linked (GlcNAc...) asparagine). Intrachain disulfides connect Cys-209–Cys-266 and Cys-337–Cys-347. 5 consecutive Fibronectin type-III domains span residues 331–428 (VPQK…ERVA), 431–530 (VPIS…TEAT), 534–625 (GPDT…IPND), 623–715 (PNDD…IGYI), and 720–829 (PIVA…KENS). 6 N-linked (GlcNAc...) asparagine glycosylation sites follow: Asn-386, Asn-403, Asn-422, Asn-441, Asn-454, and Asn-477. A disulfide bridge connects residues Cys-462 and Cys-507. Positions 515-519 (WSKWS) match the WSXWS motif motif. 6 N-linked (GlcNAc...) asparagine glycosylation sites follow: Asn-568, Asn-648, Asn-659, Asn-676, Asn-725, and Asn-783. A helical membrane pass occupies residues 830-850 (VGLIIAILIPVAVAVIVGVVT). Over 851–1093 (SILCYRKREW…TNFFQNKPND (243 aa)) the chain is Cytoplasmic. The short motif at 865–873 (FYPDIPNPE) is the Box 1 motif element. Disordered regions lie at residues 908 to 941 (ESRS…ENQA) and 1003 to 1093 (LPIN…KPND). Residues Ser-923 and Ser-1040 each carry the phosphoserine modification. Polar residues-rich tracts occupy residues 1028–1063 (ANVN…NSRQ) and 1082–1093 (SFTNFFQNKPND).

Belongs to the type I cytokine receptor family. Type 2 subfamily. In terms of assembly, heterodimer composed of LIFR and IL6ST. The heterodimer formed by LIFR and IL6ST interacts with the complex formed by CNTF and CNTFR.

Its subcellular location is the cell membrane. Signal-transducing molecule. May have a common pathway with IL6ST. The soluble form inhibits the biological activity of LIF by blocking its binding to receptors on target cells. The polypeptide is Leukemia inhibitory factor receptor (Lifr) (Rattus norvegicus (Rat)).